The sequence spans 405 residues: Cystathionine gamma-lyase (405 aa).

Positions 62, 114, and 119 each coordinate substrate. Residue Lys-212 is modified to N6-(pyridoxal phosphate)lysine. Glu-339 lines the substrate pocket.

This sequence belongs to the trans-sulfuration enzymes family. As to quaternary structure, homotetramer. Interacts with CALM in a calcium-dependent manner. Pyridoxal 5'-phosphate serves as cofactor.

The protein localises to the cytoplasm. It catalyses the reaction L,L-cystathionine + H2O = 2-oxobutanoate + L-cysteine + NH4(+). It participates in amino-acid biosynthesis; L-cysteine biosynthesis; L-cysteine from L-homocysteine and L-serine: step 2/2. Its function is as follows. Catalyzes the last step in the trans-sulfuration pathway from methionine to cysteine. Has broad substrate specificity. Converts cystathionine to cysteine, ammonia and 2-oxobutanoate. Converts two cysteine molecules to lanthionine and hydrogen sulfide. Can also accept homocysteine as substrate. Specificity depends on the levels of the endogenous substrates. Generates the endogenous signaling molecule hydrogen sulfide (H2S), and so contributes to the regulation of blood pressure. Acts as a cysteine-protein sulfhydrase by mediating sulfhydration of target proteins: sulfhydration consists of converting -SH groups into -SSH on specific cysteine residues of target proteins such as GAPDH, PTPN1 and NF-kappa-B subunit RELA, thereby regulating their function. This Bos taurus (Bovine) protein is Cystathionine gamma-lyase (CTH).